A 136-amino-acid polypeptide reads, in one-letter code: Gilles de la Tourette syndrome chromosomal region candidate gene 1 protein (136 aa).

The chain crosses the membrane as a helical span at residues alanine 73–cysteine 93.

Its subcellular location is the membrane. The chain is Gilles de la Tourette syndrome chromosomal region candidate gene 1 protein (GTSCR1) from Homo sapiens (Human).